We begin with the raw amino-acid sequence, 249 residues long: 5'-nucleotidase SurE (249 aa).

4 residues coordinate a divalent metal cation: D8, D9, S39, and N91.

This sequence belongs to the SurE nucleotidase family. A divalent metal cation is required as a cofactor.

The protein resides in the cytoplasm. The catalysed reaction is a ribonucleoside 5'-phosphate + H2O = a ribonucleoside + phosphate. Functionally, nucleotidase that shows phosphatase activity on nucleoside 5'-monophosphates. This Pseudomonas fluorescens (strain SBW25) protein is 5'-nucleotidase SurE.